Reading from the N-terminus, the 322-residue chain is Zinc finger C2HC domain-containing protein CBG14627 (322 aa).

2 consecutive C2HC/C3H-type zinc fingers follow at residues 9–38 (PVYP…LATL) and 119–148 (DYVQ…QTTR). Cys13, Cys16, His28, Cys32, Cys123, Cys126, His138, and Cys142 together coordinate Zn(2+). The segment at 144–322 (EQTTRKQGGK…SRNNSRSRIF (179 aa)) is disordered. The segment covering 148–168 (RKQGGKSSAGNRGLTSNNYRS) has biased composition (polar residues). Over residues 171–219 (SKHEGRKQESSSRNGSAERKTTTRGRDGSLSRARRDDSNDLTNRRKSLE) the composition is skewed to basic and acidic residues. Residues 220-238 (TRSQLTTGQANNRTTSLSA) are compositionally biased toward polar residues. Residues 278–294 (TTTTASASRSGSGSSSR) show a composition bias toward low complexity. The segment covering 296–305 (RTRDESRESR) has biased composition (basic and acidic residues). The span at 311-322 (SNSRNNSRSRIF) shows a compositional bias: low complexity.

It belongs to the ZC2HC1 family. Zn(2+) serves as cofactor.

In Caenorhabditis briggsae, this protein is Zinc finger C2HC domain-containing protein CBG14627.